The chain runs to 454 residues: uncharacterized protein (454 aa).

Residues Glu-422–Pro-454 are disordered.

It belongs to the Rv1128c/1148c/1588c/1702c/1945/3466 family.

This is an uncharacterized protein from Mycobacterium tuberculosis (strain CDC 1551 / Oshkosh).